We begin with the raw amino-acid sequence, 301 residues long: Small ribosomal subunit protein uS2 (301 aa).

It belongs to the universal ribosomal protein uS2 family.

The polypeptide is Small ribosomal subunit protein uS2 (Acidobacterium capsulatum (strain ATCC 51196 / DSM 11244 / BCRC 80197 / JCM 7670 / NBRC 15755 / NCIMB 13165 / 161)).